The sequence spans 477 residues: Tripartite motif-containing protein 72 (477 aa).

Leu14, Gln17, Pro29, Cys31, Thr34, Gln37, Thr53, Pro56, Gly86, Leu89, Val97, Glu100, Leu105, Gly108, Gly114, and Lys117 together coordinate Zn(2+). The RING-type zinc-finger motif lies at Cys16–Gln59. Residues Val83–Ala124 form a B box-type zinc finger. Positions Leu135 to Glu232 form a coiled coil. The region spanning Asp272–Gln476 is the B30.2/SPRY domain.

Belongs to the TRIM/RBCC family. Homodimer. Homooligomer; disulfide-linked. Oligomerizes on the phospholipid membrane. Post-translationally, disulfide bond formation at Cys-244 occurs in case of membrane damage that cause the entry of the oxidized milieu of the extracellular space, resulting in homooligomerization.

Its subcellular location is the cell membrane. The protein resides in the sarcolemma. The protein localises to the cytoplasmic vesicle membrane. The enzyme catalyses S-ubiquitinyl-[E2 ubiquitin-conjugating enzyme]-L-cysteine + [acceptor protein]-L-lysine = [E2 ubiquitin-conjugating enzyme]-L-cysteine + N(6)-ubiquitinyl-[acceptor protein]-L-lysine.. Its pathway is protein modification; protein ubiquitination. With respect to regulation, specifically binds phosphatidylserine. The binding to phospholipids enhances ubiquitination activity. Muscle-specific E3 ubiquitin-protein ligase that plays a central role in cell membrane repair by nucleating the assembly of the repair machinery at injury sites. Acts as a sensor of oxidation: upon membrane damage, entry of extracellular oxidative environment results in disulfide bond formation and homooligomerization at the injury site. This oligomerization acts as a nucleation site for recruitment of TRIM72-containing vesicles to the injury site, leading to membrane patch formation. Probably acts upstream of the Ca(2+)-dependent membrane resealing process. Required for transport of DYSF to sites of cell injury during repair patch formation. Regulates membrane budding and exocytosis. May be involved in the regulation of the mobility of KCNB1-containing endocytic vesicles. This chain is Tripartite motif-containing protein 72 (trim72), found in Xenopus laevis (African clawed frog).